Here is a 188-residue protein sequence, read N- to C-terminus: Elongation factor P-like protein (188 aa).

The protein belongs to the elongation factor P family.

This Alcanivorax borkumensis (strain ATCC 700651 / DSM 11573 / NCIMB 13689 / SK2) protein is Elongation factor P-like protein.